The following is a 1093-amino-acid chain: Mediator of RNA polymerase II transcription subunit 14 (1093 aa).

Disordered regions lie at residues 1-62 (MPGV…IDGH) and 1034-1065 (ETKS…ANDT). Over residues 19–31 (DTQTPSNGDNLRN) the composition is skewed to polar residues. Residues 41-62 (KGDKDHDPDKESYAGKPRIDGH) show a composition bias toward basic and acidic residues. Polar residues predominate over residues 1040–1056 (DYSTQPAPENQSQTGAP).

It belongs to the Mediator complex subunit 14 family. Component of the Mediator complex.

The protein resides in the nucleus. Functionally, component of the Mediator complex, a coactivator involved in the regulated transcription of nearly all RNA polymerase II-dependent genes. Mediator functions as a bridge to convey information from gene-specific regulatory proteins to the basal RNA polymerase II transcription machinery. Mediator is recruited to promoters by direct interactions with regulatory proteins and serves as a scaffold for the assembly of a functional preinitiation complex with RNA polymerase II and the general transcription factors. The protein is Mediator of RNA polymerase II transcription subunit 14 (rgr1) of Aspergillus fumigatus (strain ATCC MYA-4609 / CBS 101355 / FGSC A1100 / Af293) (Neosartorya fumigata).